Reading from the N-terminus, the 30-residue chain is Photosystem I reaction center subunit XII (30 aa).

The chain crosses the membrane as a helical span at residues 7–29; that stretch reads IYTVLCIALLAGILAIRLGSTLY.

It belongs to the PsaM family.

It localises to the plastid. Its subcellular location is the chloroplast thylakoid membrane. This chain is Photosystem I reaction center subunit XII, found in Phaeodactylum tricornutum (strain CCAP 1055/1).